The chain runs to 514 residues: MALLSQAGGAYTVPSGHVSSRTGTKTVSGCVNVLRMKETYVSSYSRTLSTKSMLKRSKRGHQLIVAASPPTEEAVVATEPLTREDLIAYLASGCKSKEKWRIGTEHEKFGFEVNTLRPMKYDQIAELLNSIAERFEWEKVMEGDKIIGLKQGKQSISLEPGGQFELSGAPLETLHQTCAEVNSHLYQVKAVAEEMGIGFLGMGFQPKWRREDIPTMPKGRYDIMRNYMPKVGSLGLDMMLRTCTVQVNLDFSSEADMIRKFRAGLALQPIATALFANSPFTEGKPNGFLSMRSHIWTDTDKDRTGMLPFVFDDSFGFEQYVDYALDVPMYFAYRNGKYVDCTGMTFRQFLAGKLPCLPGELPTYNDWENHLTTIFPEVRLKRYMEMRGADGGPWRRLCALPAFWVGLLYDEDVLQSVLDLTADWTPAEREMLRNKVPVTGLKTPFRDGLLKHVAEDVLKLAKDGLERRGYKEVGFLNAVTEVVRTGVTPAENLLEMYNGEWGQSVDPVFQELLY.

Residues 1–55 (MALLSQAGGAYTVPSGHVSSRTGTKTVSGCVNVLRMKETYVSSYSRTLSTKSMLK) constitute a chloroplast transit peptide. Intrachain disulfides connect C178/C398 and C341/C356.

It belongs to the carboxylate-amine ligase family. Glutamate--cysteine ligase type 2 subfamily. As to quaternary structure, homodimer or monomer when oxidized or reduced, respectively. In terms of processing, the Cys-178-Cys-398 disulfide bridge is known to modulate the enzyme activity according to the redox status. The oxidized form constitutes the active enzyme.

The protein localises to the plastid. It is found in the chloroplast. It catalyses the reaction L-cysteine + L-glutamate + ATP = gamma-L-glutamyl-L-cysteine + ADP + phosphate + H(+). Its pathway is sulfur metabolism; glutathione biosynthesis; glutathione from L-cysteine and L-glutamate: step 1/2. Participates in the detoxification process. This Brassica juncea (Indian mustard) protein is Glutamate--cysteine ligase, chloroplastic (GSH1).